The following is an 88-amino-acid chain: Small ribosomal subunit protein uS17 (88 aa).

This sequence belongs to the universal ribosomal protein uS17 family. In terms of assembly, part of the 30S ribosomal subunit.

In terms of biological role, one of the primary rRNA binding proteins, it binds specifically to the 5'-end of 16S ribosomal RNA. In Prochlorococcus marinus (strain MIT 9301), this protein is Small ribosomal subunit protein uS17.